Here is a 790-residue protein sequence, read N- to C-terminus: Cadherin-6 (790 aa).

Positions 1–18 (MRTYRYFLLLFWVGQPYP) are cleaved as a signal peptide. The propeptide occupies 19–53 (TLSTPLSKRTSGFPAKKRALELSGNSKNELNRSKR). N-linked (GlcNAc...) asparagine glycosylation is present at Asn-49. Cadherin domains lie at 54–159 (SWMW…EPIF), 160–268 (TKEV…PPRF), 269–383 (PQST…PPVF), 384–486 (SKLA…DNAP), and 487–608 (EFAE…LIHP). The Extracellular portion of the chain corresponds to 54 to 615 (SWMWNQFFLL…IHPTGLSTGA (562 aa)). Asn-255 is a glycosylation site (N-linked (GlcNAc...) asparagine). The disordered stretch occupies residues 259-288 (TDVNDNPPRFPQSTYQFKTPESSPPGTPIG). Positions 269-279 (PQSTYQFKTPE) are enriched in polar residues. 4 N-linked (GlcNAc...) asparagine glycosylation sites follow: Asn-399, Asn-437, Asn-455, and Asn-536. Residues 616–636 (LVAILLCIVILLVTVVLFAAL) form a helical membrane-spanning segment. Topologically, residues 637–790 (RRQRKKEPLI…YGGVDSDKDS (154 aa)) are cytoplasmic. A phosphoserine mark is found at Ser-786 and Ser-790.

As to expression, highly expressed in brain, cerebellum, and kidney. Lung, pancreas, and gastric mucosa show a weak expression. Also expressed in certain liver and kidney carcinomas.

The protein localises to the cell membrane. In terms of biological role, cadherins are calcium-dependent cell adhesion proteins. They preferentially interact with themselves in a homophilic manner in connecting cells; cadherins may thus contribute to the sorting of heterogeneous cell types. This is Cadherin-6 (CDH6) from Homo sapiens (Human).